We begin with the raw amino-acid sequence, 664 residues long: UvrABC system protein B (664 aa).

The region spanning 25–170 (NSILLGNKYQ…FVGQRISIKE (146 aa)) is the Helicase ATP-binding domain. 38–45 (GVTGSGKT) is an ATP binding site. A Beta-hairpin motif is present at residues 91–114 (YYDYYQPESYVPSKDLFIEKEATI). The region spanning 429–595 (QMEDLYIEIQ…TIVKKIQNIL (167 aa)) is the Helicase C-terminal domain. A UVR domain is found at 622 to 657 (KKLIDKLKFELEEAVNDERFEDAIVLRDKIKELGSK).

It belongs to the UvrB family. In terms of assembly, forms a heterotetramer with UvrA during the search for lesions. Interacts with UvrC in an incision complex.

It is found in the cytoplasm. The UvrABC repair system catalyzes the recognition and processing of DNA lesions. A damage recognition complex composed of 2 UvrA and 2 UvrB subunits scans DNA for abnormalities. Upon binding of the UvrA(2)B(2) complex to a putative damaged site, the DNA wraps around one UvrB monomer. DNA wrap is dependent on ATP binding by UvrB and probably causes local melting of the DNA helix, facilitating insertion of UvrB beta-hairpin between the DNA strands. Then UvrB probes one DNA strand for the presence of a lesion. If a lesion is found the UvrA subunits dissociate and the UvrB-DNA preincision complex is formed. This complex is subsequently bound by UvrC and the second UvrB is released. If no lesion is found, the DNA wraps around the other UvrB subunit that will check the other stand for damage. This is UvrABC system protein B from Borreliella afzelii (strain PKo) (Borrelia afzelii).